Here is a 389-residue protein sequence, read N- to C-terminus: Carbamoyl phosphate synthase small chain (389 aa).

The tract at residues 1 to 199 (MFNPAILVLA…AGKPFNLQTT (199 aa)) is CPSase. L-glutamine-binding residues include Ser50, Gly251, and Gly253. Residues 203–389 (HVVAYDFGIK…FINAVQATKA (187 aa)) enclose the Glutamine amidotransferase type-1 domain. Catalysis depends on Cys279, which acts as the Nucleophile. The L-glutamine site is built by Leu280, Gln283, Asn321, Gly323, and Phe324. Active-site residues include His363 and Glu365.

It belongs to the CarA family. As to quaternary structure, composed of two chains; the small (or glutamine) chain promotes the hydrolysis of glutamine to ammonia, which is used by the large (or ammonia) chain to synthesize carbamoyl phosphate. Tetramer of heterodimers (alpha,beta)4.

The enzyme catalyses hydrogencarbonate + L-glutamine + 2 ATP + H2O = carbamoyl phosphate + L-glutamate + 2 ADP + phosphate + 2 H(+). It catalyses the reaction L-glutamine + H2O = L-glutamate + NH4(+). The protein operates within amino-acid biosynthesis; L-arginine biosynthesis; carbamoyl phosphate from bicarbonate: step 1/1. Its pathway is pyrimidine metabolism; UMP biosynthesis via de novo pathway; (S)-dihydroorotate from bicarbonate: step 1/3. In terms of biological role, small subunit of the glutamine-dependent carbamoyl phosphate synthetase (CPSase). CPSase catalyzes the formation of carbamoyl phosphate from the ammonia moiety of glutamine, carbonate, and phosphate donated by ATP, constituting the first step of 2 biosynthetic pathways, one leading to arginine and/or urea and the other to pyrimidine nucleotides. The small subunit (glutamine amidotransferase) binds and cleaves glutamine to supply the large subunit with the substrate ammonia. The sequence is that of Carbamoyl phosphate synthase small chain from Haemophilus ducreyi (strain 35000HP / ATCC 700724).